The primary structure comprises 391 residues: Chalcone synthase 2 (391 aa).

C164 is an active-site residue.

This sequence belongs to the thiolase-like superfamily. Chalcone/stilbene synthases family.

It carries out the reaction (E)-4-coumaroyl-CoA + 3 malonyl-CoA + 3 H(+) = 2',4,4',6'-tetrahydroxychalcone + 3 CO2 + 4 CoA. It participates in secondary metabolite biosynthesis; flavonoid biosynthesis. In terms of biological role, the primary product of this enzyme is 4,2',4',6'-tetrahydroxychalcone (also termed naringenin-chalcone or chalcone) which can under specific conditions spontaneously isomerize into naringenin. In Citrus sinensis (Sweet orange), this protein is Chalcone synthase 2 (CHS2).